A 576-amino-acid chain; its full sequence is Sulfite reductase [NADPH] hemoprotein beta-component (576 aa).

Cys435, Cys441, Cys480, and Cys484 together coordinate [4Fe-4S] cluster. Cys484 is a siroheme binding site.

Belongs to the nitrite and sulfite reductase 4Fe-4S domain family. Alpha(8)-beta(8). The alpha component is a flavoprotein, the beta component is a hemoprotein. It depends on siroheme as a cofactor. [4Fe-4S] cluster is required as a cofactor.

It carries out the reaction hydrogen sulfide + 3 NADP(+) + 3 H2O = sulfite + 3 NADPH + 4 H(+). Its pathway is sulfur metabolism; hydrogen sulfide biosynthesis; hydrogen sulfide from sulfite (NADPH route): step 1/1. Its function is as follows. Component of the sulfite reductase complex that catalyzes the 6-electron reduction of sulfite to sulfide. This is one of several activities required for the biosynthesis of L-cysteine from sulfate. The protein is Sulfite reductase [NADPH] hemoprotein beta-component of Yersinia pestis bv. Antiqua (strain Antiqua).